Consider the following 36-residue polypeptide: Photosystem I reaction center subunit VIII (36 aa).

Residues 7–29 (PSILVPLVGLVFPAITLASLFIY) form a helical membrane-spanning segment.

The protein belongs to the PsaI family.

It is found in the plastid. The protein localises to the chloroplast thylakoid membrane. In terms of biological role, may help in the organization of the PsaL subunit. The chain is Photosystem I reaction center subunit VIII from Anthoceros angustus (Hornwort).